A 62-amino-acid chain; its full sequence is Protein CYSTEINE-RICH TRANSMEMBRANE MODULE 2 (62 aa).

2 consecutive transmembrane segments (helical) span residues 23–39 and 33–53; these read VAVA…AAFD and VVAA…LSLI.

The protein belongs to the CYSTM1 family. In terms of assembly, heterodimers. Binds weakly to CYSTM7 and WIH1/CYSTM13. Mostly expressed in stems, siliques, leaves and flowers and, to a lower extent, in roots.

It localises to the cell membrane. The protein localises to the nucleus. The protein resides in the secreted. It is found in the cell wall. In terms of biological role, involved in resistance to abiotic stress. Confers resistance to heavy metal ions (e.g. cadmium (CdCl(2)) and copper (CuCl(2))) by chelating them at the plasma membrane of root cells, thus stopping their entry and reducing their accumulation. The sequence is that of Protein CYSTEINE-RICH TRANSMEMBRANE MODULE 2 from Arabidopsis thaliana (Mouse-ear cress).